The following is a 556-amino-acid chain: DNA ligase B (556 aa).

Lys-126 acts as the N6-AMP-lysine intermediate in catalysis.

It belongs to the NAD-dependent DNA ligase family. LigB subfamily.

The catalysed reaction is NAD(+) + (deoxyribonucleotide)n-3'-hydroxyl + 5'-phospho-(deoxyribonucleotide)m = (deoxyribonucleotide)n+m + AMP + beta-nicotinamide D-nucleotide.. Catalyzes the formation of phosphodiester linkages between 5'-phosphoryl and 3'-hydroxyl groups in double-stranded DNA using NAD as a coenzyme and as the energy source for the reaction. The protein is DNA ligase B of Stutzerimonas stutzeri (strain A1501) (Pseudomonas stutzeri).